Consider the following 211-residue polypeptide: Pyridoxine/pyridoxamine 5'-phosphate oxidase (211 aa).

Residues 7-10 (RREY) and Lys-65 each bind substrate. FMN-binding positions include 60–65 (RIVLLK), 75–76 (YT), Arg-81, Lys-82, and Gln-104. Positions 122, 126, and 130 each coordinate substrate. FMN is bound by residues 139-140 (QS) and Trp-184. Substrate is bound at residue 190–192 (RLH). Arg-194 lines the FMN pocket.

The protein belongs to the pyridoxamine 5'-phosphate oxidase family. As to quaternary structure, homodimer. The cofactor is FMN.

It carries out the reaction pyridoxamine 5'-phosphate + O2 + H2O = pyridoxal 5'-phosphate + H2O2 + NH4(+). The catalysed reaction is pyridoxine 5'-phosphate + O2 = pyridoxal 5'-phosphate + H2O2. It participates in cofactor metabolism; pyridoxal 5'-phosphate salvage; pyridoxal 5'-phosphate from pyridoxamine 5'-phosphate: step 1/1. Its pathway is cofactor metabolism; pyridoxal 5'-phosphate salvage; pyridoxal 5'-phosphate from pyridoxine 5'-phosphate: step 1/1. In terms of biological role, catalyzes the oxidation of either pyridoxine 5'-phosphate (PNP) or pyridoxamine 5'-phosphate (PMP) into pyridoxal 5'-phosphate (PLP). In Vibrio vulnificus (strain CMCP6), this protein is Pyridoxine/pyridoxamine 5'-phosphate oxidase.